A 258-amino-acid polypeptide reads, in one-letter code: MSLIDPRAIIDPTAILADSVEVGPWSIIGPGVEIGEGTVVGPHVVLRGPTKIGKHNRIYQFSSVGEDTPDLKYKGEETRLVIGDHNVIREGVTIHRGTVQDRAETTLGDHNLIMAYAHIGHDSVIGNHVILVNNTALAGHVHVDDWAILSGFTLVHQFCHIGAHSFSGMGTAIGKDVPAFVTVFGNPAEARSMNFEGMRRRGFSEEAIHALRRAYKTVYRQGLTIAQALSDLAEPAAQFPEVAVFLQSIQTSTRGIIR.

This sequence belongs to the transferase hexapeptide repeat family. LpxA subfamily. As to quaternary structure, homotrimer.

It localises to the cytoplasm. The catalysed reaction is a (3R)-hydroxyacyl-[ACP] + UDP-N-acetyl-alpha-D-glucosamine = a UDP-3-O-[(3R)-3-hydroxyacyl]-N-acetyl-alpha-D-glucosamine + holo-[ACP]. The protein operates within glycolipid biosynthesis; lipid IV(A) biosynthesis; lipid IV(A) from (3R)-3-hydroxytetradecanoyl-[acyl-carrier-protein] and UDP-N-acetyl-alpha-D-glucosamine: step 1/6. Functionally, involved in the biosynthesis of lipid A, a phosphorylated glycolipid that anchors the lipopolysaccharide to the outer membrane of the cell. This chain is Acyl-[acyl-carrier-protein]--UDP-N-acetylglucosamine O-acyltransferase, found in Pseudomonas syringae pv. tomato (strain ATCC BAA-871 / DC3000).